The primary structure comprises 182 residues: Putative manganese efflux pump MntP (182 aa).

A run of 6 helical transmembrane segments spans residues 6-26 (LIPL…VSLG), 37-57 (ILYI…IGMV), 71-91 (HFAG…STIL), 101-121 (IGIS…SVGL), 131-151 (IITI…GLLI), and 162-182 (YGEI…LFPI).

This sequence belongs to the MntP (TC 9.B.29) family.

The protein resides in the cell membrane. Probably functions as a manganese efflux pump. The chain is Putative manganese efflux pump MntP from Bacillus cereus (strain G9842).